The following is a 91-amino-acid chain: DNA/RNA-binding protein Alba (91 aa).

At Lys11 the chain carries N6-acetyllysine.

It belongs to the histone-like Alba family. In terms of processing, acetylated. Acetylation at Lys-11 decreases DNA-binding affinity.

It localises to the cytoplasm. The protein resides in the chromosome. In terms of biological role, binds double-stranded DNA tightly but without sequence specificity. Incubation with DNA in vitro gives fibrous structures 10.3 +/- 1.1 nm in thickness (naked DNA is 1.83 +/- 0.37 nm). This protein does not significantly compact DNA. The polypeptide is DNA/RNA-binding protein Alba (Thermococcus kodakarensis (strain ATCC BAA-918 / JCM 12380 / KOD1) (Pyrococcus kodakaraensis (strain KOD1))).